A 176-amino-acid polypeptide reads, in one-letter code: MSDNQQPVVLGKLGSSHGIKGWLKITAYTDSVEGIFDYVPWLIKDQGVWREVKVTQWRFQGKAVVAELEGVTTREQAQMLTNCEIAILPEQMKELDDNDFYHRDLIGCEVTNVNGYNLGIVDQIVETGSNDVLLVKANAKDAFGKVERMIPFVTEQFIKQVDLQGKQIVVDWDPDF.

Positions 97–176 (DNDFYHRDLI…QIVVDWDPDF (80 aa)) constitute a PRC barrel domain.

It belongs to the RimM family. As to quaternary structure, binds ribosomal protein uS19.

It is found in the cytoplasm. Functionally, an accessory protein needed during the final step in the assembly of 30S ribosomal subunit, possibly for assembly of the head region. Essential for efficient processing of 16S rRNA. May be needed both before and after RbfA during the maturation of 16S rRNA. It has affinity for free ribosomal 30S subunits but not for 70S ribosomes. The sequence is that of Ribosome maturation factor RimM from Shewanella denitrificans (strain OS217 / ATCC BAA-1090 / DSM 15013).